The sequence spans 179 residues: Repressor of phase 1 flagellin gene (179 aa).

In terms of biological role, transcriptional repressor of the FliC phase-1 flagellin. This Salmonella abortus-equi protein is Repressor of phase 1 flagellin gene (fljA).